The chain runs to 505 residues: MVSIRPDEISSILKQQITDYDQSVNVSNVGTVLQIGDGIARIYGLDQVMAGELLEFEDGTEGIALNLEDDNVGAVLMGEALGVQEGSNVKSTGKIASVPVGEAMKGRVVNPLGQPIDGKGEIPTSDNRLIEEMAPGIIKRRSVHEPMQTGITSIDAMIPVGRGQRELIIGDRQTGKTAIAIDTIINQKGQDVVCVYVAIGQKSASVANVVEVLREKGALEYTVVVSAGASEAAALQYLAPYTGAAIAEHFMYQGKATLVIYDDLTKQAQAYRQMSLLLRRPPGREAYPGDVFYCHSRLLERAAKLSDDMGGGSMTALPIIETQAGDVSAYIPTNVISITDGQIFLSADLFNSGLRPAINVGISVSRVGGAAQTKAIKKIAGTLKLELAQFDELAAFSQFASDLDEATQQQLERGKRLRELLKQAQFSPLNLAEQVAVVYAGVKGLIDEVPVEDVTKFAAELREYLKLNKAEFIEEILKEKKLNEGLETTLKEVIKEVKSSMLATV.

G170–T177 contributes to the ATP binding site.

This sequence belongs to the ATPase alpha/beta chains family. In terms of assembly, F-type ATPases have 2 components, CF(1) - the catalytic core - and CF(0) - the membrane proton channel. CF(1) has five subunits: alpha(3), beta(3), gamma(1), delta(1), epsilon(1). CF(0) has four main subunits: a(1), b(1), b'(1) and c(9-12).

It is found in the cellular thylakoid membrane. The enzyme catalyses ATP + H2O + 4 H(+)(in) = ADP + phosphate + 5 H(+)(out). Functionally, produces ATP from ADP in the presence of a proton gradient across the membrane. The alpha chain is a regulatory subunit. The polypeptide is ATP synthase subunit alpha (Prochlorococcus marinus subsp. pastoris (strain CCMP1986 / NIES-2087 / MED4)).